The following is a 216-amino-acid chain: ATP phosphoribosyltransferase (216 aa).

Belongs to the ATP phosphoribosyltransferase family. Short subfamily. In terms of assembly, heteromultimer composed of HisG and HisZ subunits.

The protein localises to the cytoplasm. It catalyses the reaction 1-(5-phospho-beta-D-ribosyl)-ATP + diphosphate = 5-phospho-alpha-D-ribose 1-diphosphate + ATP. The protein operates within amino-acid biosynthesis; L-histidine biosynthesis; L-histidine from 5-phospho-alpha-D-ribose 1-diphosphate: step 1/9. Catalyzes the condensation of ATP and 5-phosphoribose 1-diphosphate to form N'-(5'-phosphoribosyl)-ATP (PR-ATP). Has a crucial role in the pathway because the rate of histidine biosynthesis seems to be controlled primarily by regulation of HisG enzymatic activity. In Lachnospira eligens (strain ATCC 27750 / DSM 3376 / VPI C15-48 / C15-B4) (Eubacterium eligens), this protein is ATP phosphoribosyltransferase.